The primary structure comprises 590 residues: Aspartate--tRNA(Asp/Asn) ligase (590 aa).

Glu170 is an L-aspartate binding site. The segment at 194 to 197 (QLFK) is aspartate. Arg216 provides a ligand contact to L-aspartate. ATP-binding positions include 216-218 (RDE) and Gln225. An L-aspartate-binding site is contributed by His448. Glu482 is an ATP binding site. Arg489 contacts L-aspartate. 534–537 (GWDR) contacts ATP. The disordered stretch occupies residues 557–590 (SGGGADPLTGAPAPITPQQRRESGIDAKPKKDGE). The span at 575–590 (QRRESGIDAKPKKDGE) shows a compositional bias: basic and acidic residues.

It belongs to the class-II aminoacyl-tRNA synthetase family. Type 1 subfamily. In terms of assembly, homodimer.

It localises to the cytoplasm. The enzyme catalyses tRNA(Asx) + L-aspartate + ATP = L-aspartyl-tRNA(Asx) + AMP + diphosphate. Aspartyl-tRNA synthetase with relaxed tRNA specificity since it is able to aspartylate not only its cognate tRNA(Asp) but also tRNA(Asn). Reaction proceeds in two steps: L-aspartate is first activated by ATP to form Asp-AMP and then transferred to the acceptor end of tRNA(Asp/Asn). This chain is Aspartate--tRNA(Asp/Asn) ligase, found in Mycobacterium sp. (strain KMS).